We begin with the raw amino-acid sequence, 293 residues long: GTPase Era (293 aa).

Residues 5–174 (RTISVCIIGR…ITGKAQIAPW (170 aa)) enclose the Era-type G domain. Residues 13–20 (GRPNSGKS) are G1. 13-20 (GRPNSGKS) lines the GTP pocket. Residues 39–43 (QTTRS) are G2. Positions 60 to 63 (DTPG) are G3. GTP-binding positions include 60–64 (DTPGI) and 122–125 (NKID). The segment at 122-125 (NKID) is G4. The segment at 150 to 152 (ISA) is G5. Residues 202 to 279 (LQQELPYKLT…HLFLFVKVHE (78 aa)) form the KH type-2 domain.

The protein belongs to the TRAFAC class TrmE-Era-EngA-EngB-Septin-like GTPase superfamily. Era GTPase family. In terms of assembly, monomer.

The protein localises to the cytoplasm. The protein resides in the cell inner membrane. An essential GTPase that binds both GDP and GTP, with rapid nucleotide exchange. Plays a role in 16S rRNA processing and 30S ribosomal subunit biogenesis and possibly also in cell cycle regulation and energy metabolism. The protein is GTPase Era of Rickettsia akari (strain Hartford).